The chain runs to 428 residues: Putative FBD-associated F-box protein At5g56390 (428 aa).

An F-box domain is found at Asp-2–Ser-50. In terms of domain architecture, FBD spans Cys-344 to Ser-394.

In Arabidopsis thaliana (Mouse-ear cress), this protein is Putative FBD-associated F-box protein At5g56390.